We begin with the raw amino-acid sequence, 326 residues long: E3 ubiquitin-protein ligase SINAT3 (326 aa).

Positions 1–44 (MDLDSMDCTSTMDVTDDEEIHQDRHSYASVSKHHHTNNNTTNVN) are disordered. The RING-type zinc finger occupies 63 to 99 (CPVCTNSMYPPIHQCHNGHTLCSTCKARVHNRCPTCR). The interval 113-306 (VAESLELPCK…KELKLRVTGR (194 aa)) is SBD. An SIAH-type zinc finger spans residues 116–176 (SLELPCKHMS…LVAHLRDDHK (61 aa)). The Zn(2+) site is built by Cys121, Cys128, His140, Cys144, Cys151, Cys158, His170, and His175.

This sequence belongs to the SINA (Seven in absentia) family. As to quaternary structure, interacts with SINAT6. Interacts with WAV3. Interacts with FREE1. Interacts with ELC/VPS23A.

It is found in the endosome. It localises to the multivesicular body. The protein resides in the cytoplasmic vesicle. Its subcellular location is the autophagosome. It carries out the reaction S-ubiquitinyl-[E2 ubiquitin-conjugating enzyme]-L-cysteine + [acceptor protein]-L-lysine = [E2 ubiquitin-conjugating enzyme]-L-cysteine + N(6)-ubiquitinyl-[acceptor protein]-L-lysine.. The protein operates within protein modification; protein ubiquitination. E3 ubiquitin-protein ligase that mediates ubiquitination and subsequent proteasomal degradation of target proteins. E3 ubiquitin ligases accept ubiquitin from an E2 ubiquitin-conjugating enzyme in the form of a thioester and then directly transfers the ubiquitin to targeted substrates. It probably triggers the ubiquitin-mediated degradation of different substrates. Modulates directly the ubiquitination and proteasomal-dependent degradation of FREE1, a component of the ESCRT-I complex. Modulates directly the ubiquitination and proteasomal-dependent degradation of ELC/VPS23A, a component of the ESCRT-I complex. This chain is E3 ubiquitin-protein ligase SINAT3, found in Arabidopsis thaliana (Mouse-ear cress).